The sequence spans 453 residues: Bifunctional protein GlmU (453 aa).

The segment at 1–225 (MNIVILAAGT…EWETLGVNSK (225 aa)) is pyrophosphorylase. UDP-N-acetyl-alpha-D-glucosamine-binding positions include 6 to 9 (LAAG), Lys-20, Gln-71, 76 to 77 (GT), 98 to 100 (YGD), Gly-135, Glu-150, Asn-165, and Asn-223. Asp-100 provides a ligand contact to Mg(2+). Residue Asn-223 coordinates Mg(2+). The interval 226–246 (AQLAELERIHQRNVADALLVD) is linker. Residues 247–453 (GVTLADPARV…GYVRPVKKKS (207 aa)) form an N-acetyltransferase region. Residues Arg-329 and Lys-347 each contribute to the UDP-N-acetyl-alpha-D-glucosamine site. The active-site Proton acceptor is the His-359. The UDP-N-acetyl-alpha-D-glucosamine site is built by Tyr-362 and Asn-373. Residues Ala-376, 382-383 (NY), Ser-401, and Ala-419 each bind acetyl-CoA.

It in the N-terminal section; belongs to the N-acetylglucosamine-1-phosphate uridyltransferase family. In the C-terminal section; belongs to the transferase hexapeptide repeat family. As to quaternary structure, homotrimer. It depends on Mg(2+) as a cofactor.

It localises to the cytoplasm. It catalyses the reaction alpha-D-glucosamine 1-phosphate + acetyl-CoA = N-acetyl-alpha-D-glucosamine 1-phosphate + CoA + H(+). The enzyme catalyses N-acetyl-alpha-D-glucosamine 1-phosphate + UTP + H(+) = UDP-N-acetyl-alpha-D-glucosamine + diphosphate. The protein operates within nucleotide-sugar biosynthesis; UDP-N-acetyl-alpha-D-glucosamine biosynthesis; N-acetyl-alpha-D-glucosamine 1-phosphate from alpha-D-glucosamine 6-phosphate (route II): step 2/2. Its pathway is nucleotide-sugar biosynthesis; UDP-N-acetyl-alpha-D-glucosamine biosynthesis; UDP-N-acetyl-alpha-D-glucosamine from N-acetyl-alpha-D-glucosamine 1-phosphate: step 1/1. It participates in bacterial outer membrane biogenesis; LPS lipid A biosynthesis. Its function is as follows. Catalyzes the last two sequential reactions in the de novo biosynthetic pathway for UDP-N-acetylglucosamine (UDP-GlcNAc). The C-terminal domain catalyzes the transfer of acetyl group from acetyl coenzyme A to glucosamine-1-phosphate (GlcN-1-P) to produce N-acetylglucosamine-1-phosphate (GlcNAc-1-P), which is converted into UDP-GlcNAc by the transfer of uridine 5-monophosphate (from uridine 5-triphosphate), a reaction catalyzed by the N-terminal domain. The sequence is that of Bifunctional protein GlmU from Burkholderia ambifaria (strain ATCC BAA-244 / DSM 16087 / CCUG 44356 / LMG 19182 / AMMD) (Burkholderia cepacia (strain AMMD)).